The sequence spans 578 residues: 65-kDa microtubule-associated protein 2 (578 aa).

5 coiled-coil regions span residues 64-84 (AELLQTLSDATVELSNLTTAL), 151-184 (DETDLSLKRLDDFQRKLQELQKEKSDRLQKVLEF), 235-257 (TLKEDKMQRLKKLQELATQLTDL), 290-312 (ALALDLIEQAEVEVDRLDQLKSS), and 461-489 (AMLDEYTMLRQEREDEKRRLKEQKKQQEQ). Residues 473-494 (REDEKRRLKEQKKQQEQPHTDQ) show a composition bias toward basic and acidic residues. The segment at 473–578 (REDEKRRLKE…SRADPVMASP (106 aa)) is disordered. Residues S503 and S532 each carry the phosphoserine modification. A compositionally biased stretch (polar residues) spans 549–558 (KIASPSNIVA). Phosphoserine occurs at positions 566, 569, and 577.

The protein belongs to the MAP65/ASE1 family. In terms of assembly, forms a dimer. Binds to microtubules (MT). Bundles polymerized MT via the formation of 25-nm crossbridges with centrally located endocytic MT.

Its subcellular location is the nucleus. The protein localises to the cytoplasm. It localises to the cytoskeleton. It is found in the spindle pole. The protein resides in the phragmoplast. Functionally, microtubule-associated protein that stabilize microtubules (MT). Involved in the regulation of MT organization and dynamics. Confers MT resistance to the drug propyzamide and cold conditions. This Arabidopsis thaliana (Mouse-ear cress) protein is 65-kDa microtubule-associated protein 2 (MAP65-2).